A 342-amino-acid chain; its full sequence is Vancomycin B-type resistance protein VanB (342 aa).

ATP contacts are provided by residues Lys132, 168–170, 176–177, 206–213, and Phe240; these read FVK, SS, and EQAISGCE. The ATP-grasp domain occupies 136–337; sequence YILTKNAGIA…LPALIDSLIT (202 aa). His243 is a substrate binding site. Residue 303-304 coordinates ATP; the sequence is NE. Mg(2+)-binding residues include Glu304 and Asn306.

It belongs to the D-alanine--D-alanine ligase family. Mg(2+) is required as a cofactor. It depends on Mn(2+) as a cofactor.

The protein localises to the cell membrane. It carries out the reaction (R)-lactate + D-alanine + ATP = D-alanyl-(R)-lactate + ADP + phosphate. Required for high-level resistance to glycopeptides antibiotics. D-Ala--D-Ala ligase of altered specificity which catalyzes ester bond formation between D-Ala and various D-hydroxy acids; producing a peptidoglycan which does not terminate in D-alanine but in D-lactate, thus preventing vancomycin binding. In Enterococcus faecalis (strain ATCC 700802 / V583), this protein is Vancomycin B-type resistance protein VanB (vanB).